The following is a 253-amino-acid chain: AA9 family lytic polysaccharide monooxygenase F (253 aa).

An N-terminal signal peptide occupies residues 1 to 16; that stretch reads MKVLATLLASVGLVAA. Residue His17 participates in Cu(2+) binding. The N-linked (GlcNAc...) asparagine glycan is linked to Asn22. 2 disulfides stabilise this stretch: Cys75-Cys193 and Cys163-Cys253. His105 contributes to the Cu(2+) binding site. Asn143 is a glycosylation site (N-linked (GlcNAc...) asparagine). 2 residues coordinate O2: His179 and Gln188. Cu(2+) is bound at residue Tyr190.

This sequence belongs to the polysaccharide monooxygenase AA9 family. The cofactor is Cu(2+).

Its subcellular location is the secreted. It catalyses the reaction [(1-&gt;4)-beta-D-glucosyl]n+m + reduced acceptor + O2 = 4-dehydro-beta-D-glucosyl-[(1-&gt;4)-beta-D-glucosyl]n-1 + [(1-&gt;4)-beta-D-glucosyl]m + acceptor + H2O.. Lytic polysaccharide monooxygenase (LPMO) that depolymerizes crystalline and amorphous polysaccharides via the oxidation of scissile alpha- or beta-(1-4)-glycosidic bonds, yielding C1 or C4 oxidation products. Catalysis by LPMOs requires the reduction of the active-site copper from Cu(II) to Cu(I) by a reducing agent and H(2)O(2) or O(2) as a cosubstrate. This Podospora anserina (strain S / ATCC MYA-4624 / DSM 980 / FGSC 10383) (Pleurage anserina) protein is AA9 family lytic polysaccharide monooxygenase F.